Consider the following 158-residue polypeptide: Cyclic pyranopterin monophosphate synthase (158 aa).

Residues 74 to 76 (MCH) and 112 to 113 (ME) each bind substrate. The active site involves D127.

Belongs to the MoaC family. In terms of assembly, homohexamer; trimer of dimers.

The catalysed reaction is (8S)-3',8-cyclo-7,8-dihydroguanosine 5'-triphosphate = cyclic pyranopterin phosphate + diphosphate. It functions in the pathway cofactor biosynthesis; molybdopterin biosynthesis. In terms of biological role, catalyzes the conversion of (8S)-3',8-cyclo-7,8-dihydroguanosine 5'-triphosphate to cyclic pyranopterin monophosphate (cPMP). The sequence is that of Cyclic pyranopterin monophosphate synthase from Thermoanaerobacter pseudethanolicus (strain ATCC 33223 / 39E) (Clostridium thermohydrosulfuricum).